We begin with the raw amino-acid sequence, 157 residues long: Protein Smg homolog (157 aa).

This sequence belongs to the Smg family.

This Aliivibrio salmonicida (strain LFI1238) (Vibrio salmonicida (strain LFI1238)) protein is Protein Smg homolog.